Here is a 443-residue protein sequence, read N- to C-terminus: ATP-dependent protease ATPase subunit HslU (443 aa).

ATP is bound by residues Ile18, 60-65 (GVGKTE), Asp256, Glu321, and Arg393.

The protein belongs to the ClpX chaperone family. HslU subfamily. As to quaternary structure, a double ring-shaped homohexamer of HslV is capped on each side by a ring-shaped HslU homohexamer. The assembly of the HslU/HslV complex is dependent on binding of ATP.

The protein localises to the cytoplasm. In terms of biological role, ATPase subunit of a proteasome-like degradation complex; this subunit has chaperone activity. The binding of ATP and its subsequent hydrolysis by HslU are essential for unfolding of protein substrates subsequently hydrolyzed by HslV. HslU recognizes the N-terminal part of its protein substrates and unfolds these before they are guided to HslV for hydrolysis. This Shigella boydii serotype 18 (strain CDC 3083-94 / BS512) protein is ATP-dependent protease ATPase subunit HslU.